A 728-amino-acid chain; its full sequence is MDKTQSSQGKCPVMHGANSAVASNNMDWWPKALNLDILHQHDKKTDPMDPKFNYRDAFNSLDLAAVKRDLNALMTDSQDWWPADWGHYGGLMIRMAWHSAGTYRVADGRGGAGTGNQRFAPLNSWPDNANLDKARRLLWPIKKKYGNKLSWADLMILAGNVAYESMGLKTYGFAGGREDIWHPEKDIYWGSEKQWLAPTENPNSRYSGERDLENPLAAVMMGLIYVNPEGVDGKPDPLRTAQDVRVTFARMAMNDEETVALTAGGHTVGKCHGNGKAQDLGPEPEGEELEAQGLGWLNKKGPGTGANAVTSGLEGAWTTHPTQWDNGYFHLLLNYDWELKKSPAGASQWEPINIKEEDKVVSVGDPNRKFNPIMTDADMAMKMDPEYRKISEKFYQDPAYFSEVFARAWFKLTHRDLGPKSRYLGPEVPNEDLLWQDPIPSVDYRLDASEIVELKAKLLASGLSVSDLVATAWDSARTFRGSDFRGGANGARIRLAPQKDWQANEPERLQKVLKVLIELQASLSKKVSIADLIVLGGAAAIEKAAHAAGVKITVPFIPGRGDATQEMTDVESFAVLEPLHDAYRNWQKKDYVVQPEEMMLDRTQLMGLTAHEMTVLIGGMRVLGTNYGGTRHGVFTDKVGVLTNDFFVNLTDMAYNWKPAGSNLYEIVERKTGAVKWTATRVDLVFGSNSILRSYAEVYAQDDAKEKFVHDFVAAWTKVMNADRFDLA.

Residues 1-22 (MDKTQSSQGKCPVMHGANSAVA) form the signal peptide. Residues 97-225 (WHSAGTYRVA…LAAVMMGLIY (129 aa)) constitute a cross-link (tryptophyl-tyrosyl-methioninium (Trp-Tyr) (with M-251)). Catalysis depends on His98, which acts as the Proton acceptor. Positions 225 to 251 (YVNPEGVDGKPDPLRTAQDVRVTFARM) form a cross-link, tryptophyl-tyrosyl-methioninium (Tyr-Met) (with W-97). His266 is a binding site for heme b.

Belongs to the peroxidase family. Peroxidase/catalase subfamily. In terms of assembly, homodimer or homotetramer. It depends on heme b as a cofactor. Post-translationally, formation of the three residue Trp-Tyr-Met cross-link is important for the catalase, but not the peroxidase activity of the enzyme.

The enzyme catalyses H2O2 + AH2 = A + 2 H2O. It catalyses the reaction 2 H2O2 = O2 + 2 H2O. Its function is as follows. Bifunctional enzyme with both catalase and broad-spectrum peroxidase activity. In Shewanella sp. (strain ANA-3), this protein is Catalase-peroxidase 1.